A 115-amino-acid polypeptide reads, in one-letter code: NAD(P)H-quinone oxidoreductase subunit M, organellar chromatophore (115 aa).

This sequence belongs to the complex I NdhM subunit family. As to quaternary structure, NDH-1 can be composed of about 15 different subunits; different subcomplexes with different compositions have been identified which probably have different functions.

It is found in the plastid. The protein localises to the organellar chromatophore thylakoid membrane. It catalyses the reaction a plastoquinone + NADH + (n+1) H(+)(in) = a plastoquinol + NAD(+) + n H(+)(out). The catalysed reaction is a plastoquinone + NADPH + (n+1) H(+)(in) = a plastoquinol + NADP(+) + n H(+)(out). NDH-1 shuttles electrons from an unknown electron donor, via FMN and iron-sulfur (Fe-S) centers, to quinones in the respiratory and/or the photosynthetic chain. The immediate electron acceptor for the enzyme in this species is believed to be plastoquinone. Couples the redox reaction to proton translocation, and thus conserves the redox energy in a proton gradient. This chain is NAD(P)H-quinone oxidoreductase subunit M, organellar chromatophore, found in Paulinella chromatophora.